The primary structure comprises 323 residues: Acetyl-coenzyme A carboxylase carboxyl transferase subunit alpha (323 aa).

One can recognise a CoA carboxyltransferase C-terminal domain in the interval leucine 40–threonine 293.

It belongs to the AccA family. In terms of assembly, acetyl-CoA carboxylase is a heterohexamer composed of biotin carboxyl carrier protein (AccB), biotin carboxylase (AccC) and two subunits each of ACCase subunit alpha (AccA) and ACCase subunit beta (AccD).

The protein resides in the cytoplasm. The enzyme catalyses N(6)-carboxybiotinyl-L-lysyl-[protein] + acetyl-CoA = N(6)-biotinyl-L-lysyl-[protein] + malonyl-CoA. Its pathway is lipid metabolism; malonyl-CoA biosynthesis; malonyl-CoA from acetyl-CoA: step 1/1. Component of the acetyl coenzyme A carboxylase (ACC) complex. First, biotin carboxylase catalyzes the carboxylation of biotin on its carrier protein (BCCP) and then the CO(2) group is transferred by the carboxyltransferase to acetyl-CoA to form malonyl-CoA. In Polynucleobacter asymbioticus (strain DSM 18221 / CIP 109841 / QLW-P1DMWA-1) (Polynucleobacter necessarius subsp. asymbioticus), this protein is Acetyl-coenzyme A carboxylase carboxyl transferase subunit alpha.